Reading from the N-terminus, the 154-residue chain is Crossover junction endodeoxyribonuclease RuvC (154 aa).

Residues Asp-7, Glu-67, and Asp-139 contribute to the active site. Mg(2+) contacts are provided by Asp-7, Glu-67, and Asp-139.

This sequence belongs to the RuvC family. As to quaternary structure, homodimer which binds Holliday junction (HJ) DNA. The HJ becomes 2-fold symmetrical on binding to RuvC with unstacked arms; it has a different conformation from HJ DNA in complex with RuvA. In the full resolvosome a probable DNA-RuvA(4)-RuvB(12)-RuvC(2) complex forms which resolves the HJ. Mg(2+) serves as cofactor.

The protein localises to the cytoplasm. The enzyme catalyses Endonucleolytic cleavage at a junction such as a reciprocal single-stranded crossover between two homologous DNA duplexes (Holliday junction).. The RuvA-RuvB-RuvC complex processes Holliday junction (HJ) DNA during genetic recombination and DNA repair. Endonuclease that resolves HJ intermediates. Cleaves cruciform DNA by making single-stranded nicks across the HJ at symmetrical positions within the homologous arms, yielding a 5'-phosphate and a 3'-hydroxyl group; requires a central core of homology in the junction. The consensus cleavage sequence is 5'-(A/T)TT(C/G)-3'. Cleavage occurs on the 3'-side of the TT dinucleotide at the point of strand exchange. HJ branch migration catalyzed by RuvA-RuvB allows RuvC to scan DNA until it finds its consensus sequence, where it cleaves and resolves the cruciform DNA. The protein is Crossover junction endodeoxyribonuclease RuvC of Synechococcus sp. (strain CC9605).